We begin with the raw amino-acid sequence, 286 residues long: Ribosomal RNA small subunit methyltransferase A (286 aa).

6 residues coordinate S-adenosyl-L-methionine: Asn28, Leu30, Gly55, Glu77, Asp103, and Asn123.

Belongs to the class I-like SAM-binding methyltransferase superfamily. rRNA adenine N(6)-methyltransferase family. RsmA subfamily.

It localises to the cytoplasm. It carries out the reaction adenosine(1518)/adenosine(1519) in 16S rRNA + 4 S-adenosyl-L-methionine = N(6)-dimethyladenosine(1518)/N(6)-dimethyladenosine(1519) in 16S rRNA + 4 S-adenosyl-L-homocysteine + 4 H(+). In terms of biological role, specifically dimethylates two adjacent adenosines (A1518 and A1519) in the loop of a conserved hairpin near the 3'-end of 16S rRNA in the 30S particle. May play a critical role in biogenesis of 30S subunits. In Bradyrhizobium sp. (strain ORS 278), this protein is Ribosomal RNA small subunit methyltransferase A.